The primary structure comprises 88 residues: EKC/KEOPS complex subunit SPAC4H3.13 (88 aa).

The protein belongs to the CTAG/PCC1 family. In terms of assembly, component of the EKC/KEOPS complex composed of at least of SPAP27G11.07c/BUD32, cgi121, gon7, pgp2 and SPAC4H3.13/PCC1; the whole complex dimerizes.

The protein localises to the cytoplasm. It is found in the nucleus. Its subcellular location is the chromosome. It localises to the telomere. Functionally, component of the EKC/KEOPS complex that is required for the formation of a threonylcarbamoyl group on adenosine at position 37 (t(6)A37) in tRNAs that read codons beginning with adenine. The complex is probably involved in the transfer of the threonylcarbamoyl moiety of threonylcarbamoyl-AMP (TC-AMP) to the N6 group of A37. SPAC4H3.13/PCC1 functions as a dimerization module for the complex. The EKC/KEOPS complex also promotes both telomere uncapping and telomere elongation. The complex is required for efficient recruitment of transcriptional coactivators. The polypeptide is EKC/KEOPS complex subunit SPAC4H3.13 (Schizosaccharomyces pombe (strain 972 / ATCC 24843) (Fission yeast)).